The primary structure comprises 216 residues: Adenylate kinase (216 aa).

An ATP-binding site is contributed by 10-15 (GAGKGT). The interval 30–59 (STGDIFRYNIKQGTELGKKAKSYMDQGLLV) is NMP. AMP-binding positions include Thr-31, Arg-36, 57-59 (LLV), 85-88 (GFPR), and Gln-92. Residues 126–163 (GRRICRECGATFHVQYNPSTKGALCDQCGGELYQRDDD) form an LID region. Residue Arg-127 participates in ATP binding. Zn(2+) is bound by residues Cys-130 and Cys-133. 136-137 (TF) is a binding site for ATP. Positions 150 and 153 each coordinate Zn(2+). Residues Arg-160 and Arg-171 each coordinate AMP. Lys-199 serves as a coordination point for ATP.

Belongs to the adenylate kinase family. As to quaternary structure, monomer.

Its subcellular location is the cytoplasm. The enzyme catalyses AMP + ATP = 2 ADP. The protein operates within purine metabolism; AMP biosynthesis via salvage pathway; AMP from ADP: step 1/1. Functionally, catalyzes the reversible transfer of the terminal phosphate group between ATP and AMP. Plays an important role in cellular energy homeostasis and in adenine nucleotide metabolism. This chain is Adenylate kinase, found in Alkaliphilus oremlandii (strain OhILAs) (Clostridium oremlandii (strain OhILAs)).